Here is a 730-residue protein sequence, read N- to C-terminus: Polyribonucleotide nucleotidyltransferase (730 aa).

The Mg(2+) site is built by Asp-489 and Asp-495. A KH domain is found at 556–615 (PKIDTIKVDVDKIKIVIGKGGETIDKIIEETGVKIDIDEDGNIAIYSSDQEAINRTKEII). In terms of domain architecture, S1 motif spans 625-693 (GEIYEAEVVR…DKGRIDASMK (69 aa)). The tract at residues 691–730 (SMKALLPRPPRSEKSNKEDHQSVRHHGSPKDDKGKEKYDK) is disordered. The segment covering 700–730 (PRSEKSNKEDHQSVRHHGSPKDDKGKEKYDK) has biased composition (basic and acidic residues).

The protein belongs to the polyribonucleotide nucleotidyltransferase family. Mg(2+) serves as cofactor.

It is found in the cytoplasm. The enzyme catalyses RNA(n+1) + phosphate = RNA(n) + a ribonucleoside 5'-diphosphate. Involved in mRNA degradation. Catalyzes the phosphorolysis of single-stranded polyribonucleotides processively in the 3'- to 5'-direction. In Streptococcus mutans serotype c (strain ATCC 700610 / UA159), this protein is Polyribonucleotide nucleotidyltransferase.